The sequence spans 567 residues: Glutamine-dependent NAD(+) synthetase (567 aa).

Positions 2–242 (LNLTLAQLNF…EDILTVTLDL (241 aa)) constitute a CN hydrolase domain. Residue glutamate 41 is the Proton acceptor; for glutaminase activity of the active site. Catalysis depends on lysine 109, which acts as the For glutaminase activity. An L-glutamine-binding site is contributed by tyrosine 115. Cysteine 145 functions as the Nucleophile; for glutaminase activity in the catalytic mechanism. Serine 172 and lysine 178 together coordinate L-glutamine. The ligase stretch occupies residues 287-567 (PKEEEEIYAA…RMPVTNKFFK (281 aa)). 316–323 (GLSGGIDS) contributes to the ATP binding site. Residue asparagine 399 coordinates deamido-NAD(+). Threonine 423 provides a ligand contact to ATP. Glutamate 428 and lysine 538 together coordinate deamido-NAD(+).

In the C-terminal section; belongs to the NAD synthetase family.

The catalysed reaction is deamido-NAD(+) + L-glutamine + ATP + H2O = L-glutamate + AMP + diphosphate + NAD(+) + H(+). It participates in cofactor biosynthesis; NAD(+) biosynthesis; NAD(+) from deamido-NAD(+) (L-Gln route): step 1/1. Its function is as follows. Catalyzes the ATP-dependent amidation of deamido-NAD to form NAD. Uses L-glutamine as a nitrogen source. In Aquifex aeolicus (strain VF5), this protein is Glutamine-dependent NAD(+) synthetase.